The sequence spans 179 residues: Large ribosomal subunit protein uL10 (179 aa).

This sequence belongs to the universal ribosomal protein uL10 family. Part of the ribosomal stalk of the 50S ribosomal subunit. The N-terminus interacts with L11 and the large rRNA to form the base of the stalk. The C-terminus forms an elongated spine to which L12 dimers bind in a sequential fashion forming a multimeric L10(L12)X complex.

Forms part of the ribosomal stalk, playing a central role in the interaction of the ribosome with GTP-bound translation factors. This is Large ribosomal subunit protein uL10 from Symbiobacterium thermophilum (strain DSM 24528 / JCM 14929 / IAM 14863 / T).